The following is a 74-amino-acid chain: Antimicrobial peptide HsAp1 (74 aa).

The signal sequence occupies residues 1-21; sequence MSRRVILTLVLVTILVKTMAG. Residues 22 to 33 constitute a propeptide that is removed on maturation; sequence MESKKVETTDEI. Pro-65 is subject to Proline amide. The propeptide occupies 69–74; the sequence is AISEQT.

The protein belongs to the non-disulfide-bridged peptide (NDBP) superfamily. Medium-length antimicrobial peptide (group 3) family. As to expression, expressed by the venom gland.

The protein resides in the secreted. It localises to the target cell membrane. Its function is as follows. Possesses antimicrobial activity against both Gram-negative (MIC=23.8-51.2 uM) and Gram-positive (MIC=11.8-46.5 uM) bacteria, as well as against the fungus C.tropicalis (MIC=48.6 uM). Also possesses a relatively high hemolytic activity. May act by disrupting the integrity of the bacterial cell membrane. The chain is Antimicrobial peptide HsAp1 from Heterometrus spinifer (Asia giant forest scorpion).